Consider the following 1017-residue polypeptide: uncharacterized protein (1017 aa).

Positions 1–34 (MGNLTMSRRTFVKTAAITGAAAAAFGASTHTALA) form a signal peptide, tat-type signal. The 4Fe-4S Mo/W bis-MGD-type domain maps to 45-103 (DTVAVKTCCRGCGKMECGVKVIVQNGRAIRVEGDEGAFQSMGNCCTKSQSSIQAAYHPD). 4 residues coordinate [4Fe-4S] cluster: cysteine 53, cysteine 56, cysteine 61, and cysteine 89. Residue lysine 91 is the Electron donor/acceptor of the active site.

The protein belongs to the prokaryotic molybdopterin-containing oxidoreductase family. [4Fe-4S] cluster is required as a cofactor. It depends on Mo-bis(molybdopterin guanine dinucleotide) as a cofactor. Predicted to be exported by the Tat system. The position of the signal peptide cleavage has not been experimentally proven.

This is an uncharacterized protein from Eggerthella lenta (strain ATCC 25559 / DSM 2243 / CCUG 17323 / JCM 9979 / KCTC 3265 / NCTC 11813 / VPI 0255 / 1899 B) (Eubacterium lentum).